Consider the following 204-residue polypeptide: Urease accessory protein UreG 1 (204 aa).

14-21 (GPVGSGKT) is a GTP binding site.

The protein belongs to the SIMIBI class G3E GTPase family. UreG subfamily. Homodimer. UreD, UreF and UreG form a complex that acts as a GTP-hydrolysis-dependent molecular chaperone, activating the urease apoprotein by helping to assemble the nickel containing metallocenter of UreC. The UreE protein probably delivers the nickel.

The protein localises to the cytoplasm. Facilitates the functional incorporation of the urease nickel metallocenter. This process requires GTP hydrolysis, probably effectuated by UreG. This Methylorubrum extorquens (strain PA1) (Methylobacterium extorquens) protein is Urease accessory protein UreG 1.